The sequence spans 836 residues: Subtilisin-like protease PIMMS2 (836 aa).

Residues Asp-155, His-222, and Ser-414 each act as charge relay system in the active site. Residues 802–836 are disordered; the sequence is EKKNKYNNSVLKRNEMKSHNNSQKTPKIIPRKYSR.

Belongs to the peptidase S8 family.

Its subcellular location is the cell membrane. The catalysed reaction is Hydrolysis of proteins with broad specificity for peptide bonds, and a preference for a large uncharged residue in P1. Hydrolyzes peptide amides.. Its function is as follows. Probable serine protease which plays a role in ookinete traversal of the mosquito host midgut epithelium. The chain is Subtilisin-like protease PIMMS2 from Plasmodium berghei (strain Anka).